A 456-amino-acid chain; its full sequence is MEPNNHHDGLNGQKADNPLEVAIVGGGLTGLALALGLLRRNVNFTIYERAASFGELGVGIHFTPNAERAMKALDPRILQSYVDVATHAEGGFLSFVDGLHDDDLLFQLRMGEGYKAARRCDIVSQLVKHIPQERVQLLKWLQSVEEDAEGRAVLTFRDGSTAKADVVVGCDGIRSQVRSAMFGSGPSAPRAQYAHQLAFRGLVPMAKVAATLGPEKTSRAIGYLGPGGFVLSVPLAGINMMHLEVFVMDPLPWSDDTTGSKPDKDKDEDDVKRYVLPSTRAEAEKAFTEFNPTVRSLISLLPEELGKWAIFDMLDSPAPSYALGRMCLAGDAAHASTPNQGGGAGAGMEDSLVLAEILAALADRAKSGARVGSWEISEGLKIYSDARYERAQWLVQSSRRVAQLFTRKKGAGQGGEEEEPISREILERSHQLWDYDVDAAVEEALGKLRAKVLEKH.

Residues 18–38 (PLEVAIVGGGLTGLALALGLL) traverse the membrane as a helical segment. N-linked (GlcNAc...) asparagine glycosylation is present at N43. FAD is bound by residues E48 and R119. R200 is a catalytic residue. 2 residues coordinate FAD: D331 and A344.

The protein belongs to the paxM FAD-dependent monooxygenase family. Requires FAD as cofactor.

The protein resides in the membrane. The protein operates within secondary metabolite biosynthesis. Its function is as follows. FAD-dependent monooxygenase; part of the SOR gene cluster that mediates the biosynthesis of sorbicillinoids, a diverse group of yellow secondary metabolites that restrict growth of competing pathogenic fungi but not of bacteria. Sorbicillinoids biosynthesis requires the action of two PKSs. The SOR cluster is required for the production of trichodimerol and dihydrotrichotetronin, with sor2 being sufficient for production of trichodimerol, but not dihydrotrichotetronin in the light. Sor1 iteratively combines three acetyl units and the growing chain is modified by the ketoacyl reductase subunit, and optional by the enoyl reductase subunit in the second cycle. The polyketide is then handed over to the PKS sor2, which adds three more acetyl units, and two methyl groups. Sor2 releases an aldehyde, which undergoes spontaneous cyclization resulting in the formation of sorbicillin or 2',3'-dihydrosorbicillin. The monooxygenase sor5 oxidizes sorbicillin and 2',3'-dihydrosorbicillin to 2',3'-dihydrosorbicillinol and sorbicillinol, respectively. The oxidoreductase sor8 further converts sorbicillinol into oxosorbicillinol. Sorbicillinol is the building block for the other sorbicillinoids such as disorbicillinol, bisvertinolon, dihydrobisvertinolone, and dihydrotrichotetronine. The protein is FAD-dependent monooxygenase sor5 of Hypocrea jecorina (strain QM6a) (Trichoderma reesei).